An 888-amino-acid polypeptide reads, in one-letter code: Alanine--tRNA ligase (888 aa).

Residues histidine 573, histidine 577, cysteine 676, and histidine 680 each contribute to the Zn(2+) site.

Belongs to the class-II aminoacyl-tRNA synthetase family. Requires Zn(2+) as cofactor.

The protein resides in the cytoplasm. The enzyme catalyses tRNA(Ala) + L-alanine + ATP = L-alanyl-tRNA(Ala) + AMP + diphosphate. Functionally, catalyzes the attachment of alanine to tRNA(Ala) in a two-step reaction: alanine is first activated by ATP to form Ala-AMP and then transferred to the acceptor end of tRNA(Ala). Also edits incorrectly charged Ser-tRNA(Ala) and Gly-tRNA(Ala) via its editing domain. This chain is Alanine--tRNA ligase, found in Corynebacterium glutamicum (strain R).